The primary structure comprises 384 residues: Sodium channel protein Nach (384 aa).

Topologically, residues 1-319 (AAFAYFSGFM…LVSHLGSAFS (319 aa)) are extracellular. Residues N32 and N215 are each glycosylated (N-linked (GlcNAc...) asparagine). Residues 320–340 (LFVGMSMLSLVEIIYYFTVIL) traverse the membrane as a helical segment. Residues 341–384 (RRNYVQECRARQKLQTLHRRPNFGWPGDKNSNQQKSVFYIRGRN) lie on the Cytoplasmic side of the membrane.

Belongs to the amiloride-sensitive sodium channel (TC 1.A.6) family.

It is found in the membrane. Its function is as follows. Part of a complex that plays a role in tracheal liquid clearance. Probable role in sodium transport. The chain is Sodium channel protein Nach (Nach) from Drosophila virilis (Fruit fly).